We begin with the raw amino-acid sequence, 267 residues long: Type II pantothenate kinase (267 aa).

Position 6–13 (6–13 (DAGGTLIK)) interacts with ATP. Glutamate 70 functions as the Proton acceptor in the catalytic mechanism. ATP is bound by residues threonine 99, 121-125 (GGMIQ), tyrosine 137, and serine 225.

Belongs to the type II pantothenate kinase family. As to quaternary structure, homodimer.

The protein resides in the cytoplasm. The catalysed reaction is (R)-pantothenate + ATP = (R)-4'-phosphopantothenate + ADP + H(+). It functions in the pathway cofactor biosynthesis; coenzyme A biosynthesis; CoA from (R)-pantothenate: step 1/5. In terms of biological role, catalyzes the phosphorylation of pantothenate (Pan), the first step in CoA biosynthesis. The polypeptide is Type II pantothenate kinase (Staphylococcus aureus (strain USA300)).